Reading from the N-terminus, the 404-residue chain is Tryptophan synthase beta chain (404 aa).

N6-(pyridoxal phosphate)lysine is present on K94.

This sequence belongs to the TrpB family. As to quaternary structure, tetramer of two alpha and two beta chains. It depends on pyridoxal 5'-phosphate as a cofactor.

The enzyme catalyses (1S,2R)-1-C-(indol-3-yl)glycerol 3-phosphate + L-serine = D-glyceraldehyde 3-phosphate + L-tryptophan + H2O. Its pathway is amino-acid biosynthesis; L-tryptophan biosynthesis; L-tryptophan from chorismate: step 5/5. Its function is as follows. The beta subunit is responsible for the synthesis of L-tryptophan from indole and L-serine. This is Tryptophan synthase beta chain from Staphylococcus aureus (strain MRSA252).